A 270-amino-acid chain; its full sequence is Methylthioribulose-1-phosphate dehydratase (270 aa).

Cys-122 contacts substrate. Zn(2+)-binding residues include His-140 and His-142. Glu-165 functions as the Proton donor/acceptor in the catalytic mechanism. His-230 serves as a coordination point for Zn(2+).

Belongs to the aldolase class II family. MtnB subfamily. Zn(2+) is required as a cofactor.

Its subcellular location is the cytoplasm. The catalysed reaction is 5-(methylsulfanyl)-D-ribulose 1-phosphate = 5-methylsulfanyl-2,3-dioxopentyl phosphate + H2O. It participates in amino-acid biosynthesis; L-methionine biosynthesis via salvage pathway; L-methionine from S-methyl-5-thio-alpha-D-ribose 1-phosphate: step 2/6. Functionally, catalyzes the dehydration of methylthioribulose-1-phosphate (MTRu-1-P) into 2,3-diketo-5-methylthiopentyl-1-phosphate (DK-MTP-1-P). This Candida albicans (strain SC5314 / ATCC MYA-2876) (Yeast) protein is Methylthioribulose-1-phosphate dehydratase.